Consider the following 370-residue polypeptide: tRNA-specific 2-thiouridylase MnmA (370 aa).

ATP is bound by residues 11–18 and Met37; that span reads GMSGGVDS. Positions 97-99 are interaction with target base in tRNA; that stretch reads NPD. The active-site Nucleophile is Cys102. Cysteines 102 and 199 form a disulfide. ATP is bound at residue Gly126. The interval 149 to 151 is interaction with tRNA; that stretch reads KDQ. The Cysteine persulfide intermediate role is filled by Cys199. Positions 307–308 are interaction with tRNA; the sequence is RY.

It belongs to the MnmA/TRMU family.

It localises to the cytoplasm. It catalyses the reaction S-sulfanyl-L-cysteinyl-[protein] + uridine(34) in tRNA + AH2 + ATP = 2-thiouridine(34) in tRNA + L-cysteinyl-[protein] + A + AMP + diphosphate + H(+). In terms of biological role, catalyzes the 2-thiolation of uridine at the wobble position (U34) of tRNA, leading to the formation of s(2)U34. The sequence is that of tRNA-specific 2-thiouridylase MnmA from Staphylococcus haemolyticus (strain JCSC1435).